The sequence spans 337 residues: Holliday junction branch migration complex subunit RuvB (337 aa).

Residues 1 to 181 (MQRLVEIERF…FGMNFRMQFY (181 aa)) are large ATPase domain (RuvB-L). ATP is bound by residues Leu20, Arg21, Gly62, Lys65, Thr66, Thr67, 128 to 130 (EDF), Arg171, Tyr181, and Arg218. Mg(2+) is bound at residue Thr66. The tract at residues 182-252 (SPEELSKIIS…RAQYALDELG (71 aa)) is small ATPAse domain (RuvB-S). The tract at residues 255–337 (SYGFDEMDIK…MPALDDGGLF (83 aa)) is head domain (RuvB-H). DNA-binding residues include Arg309 and Arg314.

It belongs to the RuvB family. As to quaternary structure, homohexamer. Forms an RuvA(8)-RuvB(12)-Holliday junction (HJ) complex. HJ DNA is sandwiched between 2 RuvA tetramers; dsDNA enters through RuvA and exits via RuvB. An RuvB hexamer assembles on each DNA strand where it exits the tetramer. Each RuvB hexamer is contacted by two RuvA subunits (via domain III) on 2 adjacent RuvB subunits; this complex drives branch migration. In the full resolvosome a probable DNA-RuvA(4)-RuvB(12)-RuvC(2) complex forms which resolves the HJ.

The protein localises to the cytoplasm. The catalysed reaction is ATP + H2O = ADP + phosphate + H(+). Functionally, the RuvA-RuvB-RuvC complex processes Holliday junction (HJ) DNA during genetic recombination and DNA repair, while the RuvA-RuvB complex plays an important role in the rescue of blocked DNA replication forks via replication fork reversal (RFR). RuvA specifically binds to HJ cruciform DNA, conferring on it an open structure. The RuvB hexamer acts as an ATP-dependent pump, pulling dsDNA into and through the RuvAB complex. RuvB forms 2 homohexamers on either side of HJ DNA bound by 1 or 2 RuvA tetramers; 4 subunits per hexamer contact DNA at a time. Coordinated motions by a converter formed by DNA-disengaged RuvB subunits stimulates ATP hydrolysis and nucleotide exchange. Immobilization of the converter enables RuvB to convert the ATP-contained energy into a lever motion, pulling 2 nucleotides of DNA out of the RuvA tetramer per ATP hydrolyzed, thus driving DNA branch migration. The RuvB motors rotate together with the DNA substrate, which together with the progressing nucleotide cycle form the mechanistic basis for DNA recombination by continuous HJ branch migration. Branch migration allows RuvC to scan DNA until it finds its consensus sequence, where it cleaves and resolves cruciform DNA. The chain is Holliday junction branch migration complex subunit RuvB from Sulfurimonas denitrificans (strain ATCC 33889 / DSM 1251) (Thiomicrospira denitrificans (strain ATCC 33889 / DSM 1251)).